A 167-amino-acid chain; its full sequence is Ureidoglycolate lyase (167 aa).

Belongs to the ureidoglycolate lyase family. In terms of assembly, homodimer. It depends on Ni(2+) as a cofactor.

It catalyses the reaction (S)-ureidoglycolate = urea + glyoxylate. Its pathway is nitrogen metabolism; (S)-allantoin degradation. Its function is as follows. Catalyzes the catabolism of the allantoin degradation intermediate (S)-ureidoglycolate, generating urea and glyoxylate. Involved in the utilization of allantoin as nitrogen source. This chain is Ureidoglycolate lyase, found in Pseudomonas fluorescens (strain ATCC BAA-477 / NRRL B-23932 / Pf-5).